A 102-amino-acid polypeptide reads, in one-letter code: Alpha-ketoglutarate dehydrogenase component 4 (102 aa).

N-acetylglycine is present on Gly2. Lys4 carries the post-translational modification N6-succinyllysine. A disordered region spans residues 23 to 70; that stretch reads KFPNRRDKPKLSASEALGSAALPSHSSAISQHSKGSTSPDLLMHQGPP. A compositionally biased stretch (low complexity) spans 33-46; the sequence is LSASEALGSAALPS. A compositionally biased stretch (polar residues) spans 47–61; sequence HSSAISQHSKGSTSP. 3 positions are modified to phosphoserine: Ser48, Ser60, and Ser89.

Belongs to the alpha-ketoglutarate dehydrogenase component 4 family. In terms of assembly, component of the 2-oxoglutarate dehydrogenase complex (OGDHC), composed of OGDH (2-oxoglutarate dehydrogenase; also called E1 subunit), DLST (dihydrolipoamide succinyltransferase; also called E2 subunit) and DLD (dihydrolipoamide dehydrogenase; also called E3 subunit), and the assembly factor KGD4. Within OGDHC complex, interacts (via N-terminus) with E3 subunit and (via C-terminus) with E2 subunit.

The protein resides in the mitochondrion. In terms of biological role, molecular adapter that is necessary to form a stable 2-oxoglutarate dehydrogenase enzyme complex (OGDHC). Enables the specific recruitment of E3 subunit to E2 subunit in the 2-oxoglutarate dehydrogenase complex (OGDHC). The chain is Alpha-ketoglutarate dehydrogenase component 4 from Mus musculus (Mouse).